Consider the following 204-residue polypeptide: Proteasome subunit beta 1 (204 aa).

The propeptide at 1–9 (MSYEYGTGA) is removed in mature form; by autocatalysis. Thr-10 acts as the Nucleophile in catalysis.

The protein belongs to the peptidase T1B family. In terms of assembly, the 20S proteasome core is composed of 14 alpha and 14 beta subunits that assemble into four stacked heptameric rings, resulting in a barrel-shaped structure. The two inner rings, each composed of seven catalytic beta subunits, are sandwiched by two outer rings, each composed of seven alpha subunits. The catalytic chamber with the active sites is on the inside of the barrel. Has a gated structure, the ends of the cylinder being occluded by the N-termini of the alpha-subunits. Is capped at one or both ends by the proteasome regulatory ATPase, PAN.

Its subcellular location is the cytoplasm. The catalysed reaction is Cleavage of peptide bonds with very broad specificity.. The formation of the proteasomal ATPase PAN-20S proteasome complex, via the docking of the C-termini of PAN into the intersubunit pockets in the alpha-rings, triggers opening of the gate for substrate entry. Interconversion between the open-gate and close-gate conformations leads to a dynamic regulation of the 20S proteasome proteolysis activity. Its function is as follows. Component of the proteasome core, a large protease complex with broad specificity involved in protein degradation. The sequence is that of Proteasome subunit beta 1 from Hyperthermus butylicus (strain DSM 5456 / JCM 9403 / PLM1-5).